The following is a 347-amino-acid chain: Very-long-chain 3-oxoacyl-CoA reductase (347 aa).

The helical transmembrane segment at Leu-22–Met-42 threads the bilayer. 7 residues coordinate NADP(+): Val-68, Asp-122, Asn-149, Tyr-223, Lys-227, Val-256, and Ser-258. The active-site Proton donor is the Tyr-223. Catalysis depends on Lys-227, which acts as the Lowers pKa of active site Tyr.

This sequence belongs to the short-chain dehydrogenases/reductases (SDR) family.

Its subcellular location is the endoplasmic reticulum membrane. It catalyses the reaction a very-long-chain (3R)-3-hydroxyacyl-CoA + NADP(+) = a very-long-chain 3-oxoacyl-CoA + NADPH + H(+). It participates in lipid metabolism; fatty acid biosynthesis. In terms of biological role, component of the microsomal membrane bound fatty acid elongation system, which produces the 26-carbon very long-chain fatty acids (VLCFA) from palmitate. Catalyzes the reduction of the 3-ketoacyl-CoA intermediate that is formed in each cycle of fatty acid elongation. VLCFAs serve as precursors for ceramide and sphingolipids. The chain is Very-long-chain 3-oxoacyl-CoA reductase from Vanderwaltozyma polyspora (strain ATCC 22028 / DSM 70294 / BCRC 21397 / CBS 2163 / NBRC 10782 / NRRL Y-8283 / UCD 57-17) (Kluyveromyces polysporus).